The primary structure comprises 159 residues: Ribosomal RNA large subunit methyltransferase H (159 aa).

S-adenosyl-L-methionine-binding positions include leucine 76, glycine 108, and 127–132 (FGRLTL).

It belongs to the RNA methyltransferase RlmH family. In terms of assembly, homodimer.

It is found in the cytoplasm. The enzyme catalyses pseudouridine(1915) in 23S rRNA + S-adenosyl-L-methionine = N(3)-methylpseudouridine(1915) in 23S rRNA + S-adenosyl-L-homocysteine + H(+). Functionally, specifically methylates the pseudouridine at position 1915 (m3Psi1915) in 23S rRNA. This chain is Ribosomal RNA large subunit methyltransferase H, found in Listeria monocytogenes serovar 1/2a (strain ATCC BAA-679 / EGD-e).